The primary structure comprises 64 residues: Sec-independent protein translocase protein TatA (64 aa).

Residues 10–30 form a helical membrane-spanning segment; it reads LVLILGIALIIFGPGKLPELG.

It belongs to the TatA/E family. Forms a complex with TatC.

The protein resides in the cell membrane. Its function is as follows. Part of the twin-arginine translocation (Tat) system that transports large folded proteins containing a characteristic twin-arginine motif in their signal peptide across membranes. TatA could form the protein-conducting channel of the Tat system. The sequence is that of Sec-independent protein translocase protein TatA from Alkaliphilus oremlandii (strain OhILAs) (Clostridium oremlandii (strain OhILAs)).